A 77-amino-acid chain; its full sequence is NAD(P)H-quinone oxidoreductase subunit L (77 aa).

A run of 2 helical transmembrane segments spans residues 12-32 and 47-67; these read LVAYVGIVSIYLLVIPLILFY and LIVYGLVFLFFPGLILFSPFL.

The protein belongs to the complex I NdhL subunit family. In terms of assembly, NDH-1 can be composed of about 15 different subunits; different subcomplexes with different compositions have been identified which probably have different functions.

It localises to the cellular thylakoid membrane. It catalyses the reaction a plastoquinone + NADH + (n+1) H(+)(in) = a plastoquinol + NAD(+) + n H(+)(out). The catalysed reaction is a plastoquinone + NADPH + (n+1) H(+)(in) = a plastoquinol + NADP(+) + n H(+)(out). Functionally, NDH-1 shuttles electrons from an unknown electron donor, via FMN and iron-sulfur (Fe-S) centers, to quinones in the respiratory and/or the photosynthetic chain. The immediate electron acceptor for the enzyme in this species is believed to be plastoquinone. Couples the redox reaction to proton translocation, and thus conserves the redox energy in a proton gradient. Cyanobacterial NDH-1 also plays a role in inorganic carbon-concentration. In Prochlorococcus marinus subsp. pastoris (strain CCMP1986 / NIES-2087 / MED4), this protein is NAD(P)H-quinone oxidoreductase subunit L.